We begin with the raw amino-acid sequence, 89 residues long: Mu-like prophage FluMu DNA-binding protein Ner (89 aa).

Positions 57 to 76 (ERLVANAIGVPPEVIWAGRF) form a DNA-binding region, H-T-H motif.

The protein belongs to the ner transcriptional regulatory family.

Functionally, negative regulator of transcription starting from the Pe and Pc promoters of Mu. Also negatively regulates its own gene transcription. The protein is Mu-like prophage FluMu DNA-binding protein Ner (nlp) of Haemophilus influenzae (strain ATCC 51907 / DSM 11121 / KW20 / Rd).